A 948-amino-acid chain; its full sequence is 3-hydroxy-3-methylglutaryl-coenzyme A reductase (948 aa).

The next 6 membrane-spanning stretches (helical) occupy residues 9-25 (LLFF…VLLI), 55-71 (VIIF…VLTC), 96-112 (LILF…VLFV), 124-140 (TSVF…FIVL), 207-223 (IIYI…FMRI), and 286-302 (CWST…ILHL). Asn316 carries an N-linked (GlcNAc...) asparagine glycan. The helical transmembrane segment at 347 to 363 (VINANLVVYLFLGLFLF) threads the bilayer. Positions 364-466 (KRIRLNKPIN…MLTEKIKQGL (103 aa)) are linker. N-linked (GlcNAc...) asparagine glycosylation is present at Asn430. Residues 467 to 948 (GHELSDTEIL…VNPEISHYTM (482 aa)) are catalytic. Active-site charge relay system residues include Glu567, Lys699, and Asp777. His869 acts as the Proton donor in catalysis. Residue Asn895 is glycosylated (N-linked (GlcNAc...) asparagine).

This sequence belongs to the HMG-CoA reductase family.

Its subcellular location is the endoplasmic reticulum membrane. It localises to the peroxisome membrane. It carries out the reaction (R)-mevalonate + 2 NADP(+) + CoA = (3S)-3-hydroxy-3-methylglutaryl-CoA + 2 NADPH + 2 H(+). It functions in the pathway metabolic intermediate biosynthesis; (R)-mevalonate biosynthesis; (R)-mevalonate from acetyl-CoA: step 3/3. This transmembrane glycoprotein is involved in the control of cholesterol and nonsterol isoprenoid compounds biosynthesis. It is the rate-limiting enzyme of sterol biosynthesis. The protein is 3-hydroxy-3-methylglutaryl-coenzyme A reductase of Schistosoma mansoni (Blood fluke).